A 605-amino-acid polypeptide reads, in one-letter code: Elongation factor 4 (605 aa).

Positions 4–181 constitute a tr-type G domain; that stretch reads NKIKTFSIIA…AIVEYVPSPL (178 aa). GTP contacts are provided by residues 16–21 and 128–131; these read DHGKST and NKVD.

The protein belongs to the TRAFAC class translation factor GTPase superfamily. Classic translation factor GTPase family. LepA subfamily.

Its subcellular location is the cell membrane. The enzyme catalyses GTP + H2O = GDP + phosphate + H(+). Required for accurate and efficient protein synthesis under certain stress conditions. May act as a fidelity factor of the translation reaction, by catalyzing a one-codon backward translocation of tRNAs on improperly translocated ribosomes. Back-translocation proceeds from a post-translocation (POST) complex to a pre-translocation (PRE) complex, thus giving elongation factor G a second chance to translocate the tRNAs correctly. Binds to ribosomes in a GTP-dependent manner. This chain is Elongation factor 4, found in Mycoplasmopsis synoviae (strain 53) (Mycoplasma synoviae).